A 121-amino-acid polypeptide reads, in one-letter code: MSRTKGGTVTHARHKKVTDAAKGYYGRRKNTFKVARQAVDKANQYATRDRKNRKRQFRALWIQRINAAVRAHDEALTYSRFINGLSLAGIEVDRKVLADLAVHEPEAFSAIVDQAKAALPA.

This sequence belongs to the bacterial ribosomal protein bL20 family.

In terms of biological role, binds directly to 23S ribosomal RNA and is necessary for the in vitro assembly process of the 50S ribosomal subunit. It is not involved in the protein synthesizing functions of that subunit. The chain is Large ribosomal subunit protein bL20 from Dinoroseobacter shibae (strain DSM 16493 / NCIMB 14021 / DFL 12).